The chain runs to 276 residues: Nickel import system permease protein NikC (276 aa).

The next 5 helical transmembrane spans lie at 10–30, 73–93, 108–128, 186–206, and 238–258; these read LIFFVFGAFIFVMIVLQFFVS, LFVTVLTLIAIVVIGVTLGLF, FIDVGLSIPEFIIVIALASFF, IIPAIIVLMVVDFGKIILYIS, and IMLIAPASVIAITILIFNLTG. Residues 69–258 enclose the ABC transmembrane type-1 domain; that stretch reads ARSTLFVTVL…ITILIFNLTG (190 aa).

This sequence belongs to the binding-protein-dependent transport system permease family. OppBC subfamily. The complex is composed of two ATP-binding proteins (NikD and NikE), two transmembrane proteins (NikB and NikC) and a solute-binding protein (NikA).

The protein resides in the cell membrane. Functionally, part of the ABC transporter complex NikABCDE (Opp2) involved in nickel import. Probably responsible for the translocation of the substrate across the membrane. The sequence is that of Nickel import system permease protein NikC from Staphylococcus aureus (strain bovine RF122 / ET3-1).